The chain runs to 274 residues: 3-methyl-2-oxobutanoate hydroxymethyltransferase (274 aa).

The Mg(2+) site is built by aspartate 49 and aspartate 88. 3-methyl-2-oxobutanoate contacts are provided by residues 49 to 50, aspartate 88, and lysine 118; that span reads DS. Glutamate 120 is a Mg(2+) binding site. Catalysis depends on glutamate 187, which acts as the Proton acceptor.

The protein belongs to the PanB family. In terms of assembly, homodecamer; pentamer of dimers. Mg(2+) serves as cofactor.

It localises to the cytoplasm. It carries out the reaction 3-methyl-2-oxobutanoate + (6R)-5,10-methylene-5,6,7,8-tetrahydrofolate + H2O = 2-dehydropantoate + (6S)-5,6,7,8-tetrahydrofolate. It participates in cofactor biosynthesis; (R)-pantothenate biosynthesis; (R)-pantoate from 3-methyl-2-oxobutanoate: step 1/2. Functionally, catalyzes the reversible reaction in which hydroxymethyl group from 5,10-methylenetetrahydrofolate is transferred onto alpha-ketoisovalerate to form ketopantoate. The sequence is that of 3-methyl-2-oxobutanoate hydroxymethyltransferase from Parvibaculum lavamentivorans (strain DS-1 / DSM 13023 / NCIMB 13966).